Reading from the N-terminus, the 142-residue chain is ATP synthase epsilon chain (142 aa).

This sequence belongs to the ATPase epsilon chain family. In terms of assembly, F-type ATPases have 2 components, CF(1) - the catalytic core - and CF(0) - the membrane proton channel. CF(1) has five subunits: alpha(3), beta(3), gamma(1), delta(1), epsilon(1). CF(0) has three main subunits: a, b and c.

The protein localises to the cell inner membrane. Functionally, produces ATP from ADP in the presence of a proton gradient across the membrane. This is ATP synthase epsilon chain from Histophilus somni (strain 129Pt) (Haemophilus somnus).